Here is a 304-residue protein sequence, read N- to C-terminus: UDP-3-O-acyl-N-acetylglucosamine deacetylase (304 aa).

The Zn(2+) site is built by histidine 78, histidine 237, and aspartate 241. The active-site Proton donor is the histidine 264.

It belongs to the LpxC family. Requires Zn(2+) as cofactor.

It carries out the reaction a UDP-3-O-[(3R)-3-hydroxyacyl]-N-acetyl-alpha-D-glucosamine + H2O = a UDP-3-O-[(3R)-3-hydroxyacyl]-alpha-D-glucosamine + acetate. It functions in the pathway glycolipid biosynthesis; lipid IV(A) biosynthesis; lipid IV(A) from (3R)-3-hydroxytetradecanoyl-[acyl-carrier-protein] and UDP-N-acetyl-alpha-D-glucosamine: step 2/6. Its function is as follows. Catalyzes the hydrolysis of UDP-3-O-myristoyl-N-acetylglucosamine to form UDP-3-O-myristoylglucosamine and acetate, the committed step in lipid A biosynthesis. This is UDP-3-O-acyl-N-acetylglucosamine deacetylase from Legionella pneumophila (strain Lens).